The sequence spans 221 residues: Zingipain-1 (221 aa).

3 cysteine pairs are disulfide-bonded: cysteine 24-cysteine 65, cysteine 58-cysteine 98, and cysteine 155-cysteine 206. Cysteine 27 is an active-site residue. Residues asparagine 95 and asparagine 156 are each glycosylated (N-linked (GlcNAc...) asparagine). Active-site residues include histidine 161 and asparagine 181.

The protein belongs to the peptidase C1 family.

The enzyme catalyses Preferential cleavage of peptides with a proline residue at the P2 position.. Cysteine proteinase with a high level of diversity in substrate specificity, an amino acid bearing a proline residue at the P2 position is preferred. The protein is Zingipain-1 of Zingiber officinale (Ginger).